A 354-amino-acid chain; its full sequence is Tryptophan--tRNA ligase (354 aa).

Residues 13–15 (QPT) and 21–22 (GN) each bind ATP. The 'HIGH' region signature appears at 14-22 (PTGNLHLGN). An L-tryptophan-binding site is contributed by Asp137. ATP-binding positions include 149 to 151 (GDD), Val208, and 217 to 221 (KMSKS). The 'KMSKS' region signature appears at 217–221 (KMSKS).

This sequence belongs to the class-I aminoacyl-tRNA synthetase family. As to quaternary structure, homodimer.

It localises to the cytoplasm. It catalyses the reaction tRNA(Trp) + L-tryptophan + ATP = L-tryptophyl-tRNA(Trp) + AMP + diphosphate + H(+). In terms of biological role, catalyzes the attachment of tryptophan to tRNA(Trp). This Rhizobium meliloti (strain 1021) (Ensifer meliloti) protein is Tryptophan--tRNA ligase.